A 1337-amino-acid chain; its full sequence is Protein cordon-bleu (1337 aa).

A disordered region spans residues 1-41 (MDAPRALAAKPPTGRKMKARAPPPPGKPAAQNVHSEQKLPH). Residues Ser-47, Ser-50, Ser-212, Ser-235, Ser-272, and Ser-294 each carry the phosphoserine modification. Disordered regions lie at residues 260–556 (SKAE…NDDE) and 647–768 (IASQ…HHGQ). Residues 288-317 (CVTTPNSPSLHSRSLTLGPSLSLGNISGVS) are compositionally biased toward polar residues. A KKRRAP 1 motif is present at residues 323-328 (KKRRAP). Ser-346 and Ser-349 each carry phosphoserine. Residues 356-361 (KKRRAP) carry the KKRRAP 2 motif. Positions 361 to 374 (PAPPPPQQPPPSPV) are enriched in pro residues. A Phosphoserine modification is found at Ser-372. Basic and acidic residues predominate over residues 377 to 387 (NRKEDKEENRK). Positions 411–423 (LVLPPPPPYPPPD) are enriched in pro residues. A compositionally biased stretch (acidic residues) spans 469–480 (ESEETASEDTTE). Residues 484-500 (VMSSPSDAISLDSQQDS) are compositionally biased toward polar residues. Thr-522 carries the post-translational modification Phosphothreonine. Residues 526–541 (GPQKSPSWGKSGSGSS) show a composition bias toward low complexity. Polar residues-rich tracts occupy residues 647–666 (IASQ…QPFV) and 687–710 (QPTL…TSLV). Phosphoserine is present on Ser-649. The span at 714 to 736 (LIDDPKAKDKGKVHGSSHSEKTQ) shows a compositional bias: basic and acidic residues. Phosphoserine is present on Ser-816. Disordered regions lie at residues 892–923 (TPQQ…SVKV) and 967–991 (KATT…DDAA). Phosphoserine is present on Ser-1038. Residues 1070–1090 (GFNEKQTTSNQKANSTSNFSQ) are compositionally biased toward polar residues. Disordered stretches follow at residues 1070 to 1094 (GFNE…ALDK), 1113 to 1133 (MNGS…KEST), 1145 to 1168 (KPSS…FGPK), and 1192 to 1221 (AIHS…SYVE). Ser-1128 bears the Phosphoserine mark. WH2 domains lie at 1185-1205 (LHSA…LRKT) and 1225-1245 (ERSA…LRKV). Residues 1197–1214 (GGREKLRKTAEQTSEGRP) are compositionally biased toward basic and acidic residues. Residues 1262 to 1310 (GAPGLDKPQQEDLGLPPPPALPPPPAPAPQAPSASVTVSRFSTGTPSNS) form a disordered region. A compositionally biased stretch (pro residues) spans 1276–1291 (LPPPPALPPPPAPAPQ). Polar residues predominate over residues 1297–1310 (VTVSRFSTGTPSNS). Ser-1303 carries the phosphoserine modification. The WH2 3 domain maps to 1313–1333 (ARQALMDAIRSGTGAARLRKV).

As to quaternary structure, identified in a complex composed of COBL, PACSIN1 and WASL. Interacts with PACSIN1, PACSIN2 and PACSIN3. Identified in a complex composed of ACTA1, COBL, GSN and TMSB4X. Interacts (via WH2 domains) with actin monomers. Interacts with DBNL. Detected in brain cortex and in the Purkinje cell layer in the cerebellum. Detected in hippocampus neurons, and at lower levels in testis, lung and spleen (at protein level). Detected in embryonic neural tube.

It is found in the cell membrane. It localises to the cytoplasm. The protein resides in the cytoskeleton. The protein localises to the cell projection. Its subcellular location is the ruffle. Functionally, plays an important role in the reorganization of the actin cytoskeleton. Binds to and sequesters actin monomers (G actin). Nucleates actin polymerization by assembling three actin monomers in cross-filament orientation and thereby promotes growth of actin filaments at the barbed end. Can also mediate actin depolymerization at barbed ends and severing of actin filaments. Promotes formation of cell ruffles. Regulates neuron morphogenesis and increases branching of axons and dendrites. Regulates dendrite branching in Purkinje cells. The protein is Protein cordon-bleu (Cobl) of Mus musculus (Mouse).